We begin with the raw amino-acid sequence, 280 residues long: Protoheme IX farnesyltransferase (280 aa).

9 helical membrane-spanning segments follow: residues 2 to 21 (VVAT…RAGL), 30 to 50 (AAVP…VVSG), 83 to 103 (LALW…LVGV), 105 to 125 (ATTG…YTPL), 131 to 151 (LSLP…WTSV), 160 to 180 (FLLF…ISLF), 206 to 226 (IVGY…LGVA), 229 to 249 (VYLG…VYGL), and 260 to 280 (QVFF…MIGA).

The protein belongs to the UbiA prenyltransferase family. Protoheme IX farnesyltransferase subfamily.

It is found in the cell inner membrane. The catalysed reaction is heme b + (2E,6E)-farnesyl diphosphate + H2O = Fe(II)-heme o + diphosphate. The protein operates within porphyrin-containing compound metabolism; heme O biosynthesis; heme O from protoheme: step 1/1. Functionally, converts heme B (protoheme IX) to heme O by substitution of the vinyl group on carbon 2 of heme B porphyrin ring with a hydroxyethyl farnesyl side group. In Sorangium cellulosum (strain So ce56) (Polyangium cellulosum (strain So ce56)), this protein is Protoheme IX farnesyltransferase.